The primary structure comprises 460 residues: Probable argininosuccinate lyase (460 aa).

Serine 26, asparagine 114, and threonine 159 together coordinate 2-(N(omega)-L-arginino)succinate. Histidine 160 acts as the Proton acceptor in catalysis. Catalysis depends on serine 281, which acts as the Proton donor. The 2-(N(omega)-L-arginino)succinate site is built by asparagine 289, tyrosine 321, glutamine 326, and lysine 329.

This sequence belongs to the lyase 1 family. Argininosuccinate lyase subfamily. In terms of assembly, homotetramer.

The catalysed reaction is 2-(N(omega)-L-arginino)succinate = fumarate + L-arginine. The protein operates within amino-acid biosynthesis; L-arginine biosynthesis; L-arginine from L-ornithine and carbamoyl phosphate: step 3/3. This chain is Probable argininosuccinate lyase (argx), found in Schizosaccharomyces pombe (strain 972 / ATCC 24843) (Fission yeast).